Reading from the N-terminus, the 167-residue chain is Large ribosomal subunit protein bL9 (167 aa).

Belongs to the bacterial ribosomal protein bL9 family.

Its function is as follows. Binds to the 23S rRNA. The polypeptide is Large ribosomal subunit protein bL9 (Nitratidesulfovibrio vulgaris (strain ATCC 29579 / DSM 644 / CCUG 34227 / NCIMB 8303 / VKM B-1760 / Hildenborough) (Desulfovibrio vulgaris)).